Reading from the N-terminus, the 560-residue chain is Choline/ethanolamine transporter FLVCR1 (560 aa).

The tract at residues 1–22 is disordered; it reads MVKLNDEEGAAMAPGHQPTNGY. Residues 1-99 are Cytoplasmic-facing; that stretch reads MVKLNDEEGA…TPGTEGSPAP (99 aa). Residue Ser56 is modified to Phosphoserine. The interval 68-99 is disordered; that stretch reads QTPLAPEEETQTRLLPTGPGEETPGTEGSPAP. The segment covering 83–95 has biased composition (low complexity); it reads PTGPGEETPGTEG. The helical transmembrane segment at 100–124 threads the bilayer; it reads QTALSARRFVVLLIFSLYSLVNAFQ. Over 125 to 142 the chain is Extracellular; it reads WIQYSVISNVFEGFYGVS. A helical membrane pass occupies residues 143 to 170; that stretch reads SLHIDWLSMVYMLAYVPLIFPATWLLDT. Topologically, residues 171-172 are cytoplasmic; it reads RG. Residues 173 to 192 traverse the membrane as a helical segment; the sequence is LRLTALLGSGLNCLGAWVKC. Over 193–199 the chain is Extracellular; it reads ASVQQHL. The helical transmembrane segment at 200 to 228 threads the bilayer; sequence FWVTMLGQCLCSVAQVFILGLPSRIASVW. Ethanolamine is bound at residue Gln214. The Cytoplasmic segment spans residues 229–233; sequence FGPKE. Residues 234–259 form a helical membrane-spanning segment; sequence VSTACATAVLGNQLGAAIGFLLPPVL. At 260 to 265 the chain is on the extracellular side; sequence VPNTQN. Asn265 carries N-linked (GlcNAc...) asparagine glycosylation. A helical membrane pass occupies residues 266-295; sequence NTDLLACNISTMFYGTSSVATFLCFLTIIA. Residues 296–331 are Cytoplasmic-facing; that stretch reads FKEKPQYPPSQAQAALQNSPPAKYSYKKSIRNLFRN. A helical membrane pass occupies residues 332–362; that stretch reads VPFVLLLITYGIITGAFYSVSTLLNQMILTY. At 363–366 the chain is on the extracellular side; sequence YKGE. The helical transmembrane segment at 367-395 threads the bilayer; the sequence is EVSAGKIGLTLVVAGMVGSILCGFWLDYT. Over 396-397 the chain is Cytoplasmic; it reads KI. The chain crosses the membrane as a helical span at residues 398–420; it reads YKQTTLIVYILSFLGMVIFTFTL. Residues 421–423 lie on the Extracellular side of the membrane; that stretch reads DLG. Residues 424–453 form a helical membrane-spanning segment; the sequence is YGIVVFVTGGVLGFFMTGYLPLGFEFAVEI. Over 454–461 the chain is Cytoplasmic; it reads TYPESEGT. The helical transmembrane segment at 462–487 threads the bilayer; it reads SSGLLNAAAQIFGILFTLAQGKLTTD. Gln471 provides a ligand contact to ethanolamine. Residue Gln471 coordinates choline. Residues 488 to 489 lie on the Extracellular side of the membrane; that stretch reads YS. A helical transmembrane segment spans residues 490-512; the sequence is PKAGNIFLCVWLFLGIILTALIK. The Cytoplasmic portion of the chain corresponds to 513 to 560; sequence SDLRRHNINIGIANGDIKAVPVEDTVEDSPTDKESKTIVMSKQSESAI. The segment at 537 to 560 is disordered; that stretch reads TVEDSPTDKESKTIVMSKQSESAI. Phosphoserine is present on Ser541. Residues 550-560 are compositionally biased toward polar residues; it reads IVMSKQSESAI.

The protein belongs to the major facilitator superfamily. Feline leukemia virus subgroup C receptor (TC 2.A.1.28.1) family.

The protein localises to the cell membrane. It catalyses the reaction choline(out) = choline(in). The catalysed reaction is ethanolamine(in) = ethanolamine(out). The enzyme catalyses heme b(in) = heme b(out). Its function is as follows. Uniporter that mediates the transport of extracellular choline and ethanolamine into cells, thereby playing a key role in phospholipid biosynthesis. Choline and ethanolamine are the precursors of phosphatidylcholine and phosphatidylethanolamine, respectively, the two most abundant phospholipids. Transport is not coupled with proton transport and is exclusively driven by the choline (or ethanolamine) gradient across the plasma membrane. Also acts as a heme b transporter that mediates heme efflux from the cytoplasm to the extracellular compartment. In terms of biological role, (Microbial infection) Confers susceptibility to Feline leukemia virus subgroup C (FeLV-C) infection, which is associated with fatal erythroid aplasia, also known as aplastic anemia. In Felis catus (Cat), this protein is Choline/ethanolamine transporter FLVCR1 (FLVCR1).